Consider the following 70-residue polypeptide: Translational regulator CsrA (70 aa).

This sequence belongs to the CsrA/RsmA family. Homodimer; the beta-strands of each monomer intercalate to form a hydrophobic core, while the alpha-helices form wings that extend away from the core.

The protein localises to the cytoplasm. In terms of biological role, a key translational regulator that binds mRNA to regulate translation initiation and/or mRNA stability. Mediates global changes in gene expression, shifting from rapid growth to stress survival by linking envelope stress, the stringent response and the catabolite repression systems. Usually binds in the 5'-UTR; binding at or near the Shine-Dalgarno sequence prevents ribosome-binding, repressing translation, binding elsewhere in the 5'-UTR can activate translation and/or stabilize the mRNA. Its function is antagonized by small RNA(s). In Hydrogenovibrio crunogenus (strain DSM 25203 / XCL-2) (Thiomicrospira crunogena), this protein is Translational regulator CsrA.